Here is a 63-residue protein sequence, read N- to C-terminus: Large ribosomal subunit protein bL35 (63 aa).

Residues 24-44 (RAKAYRSHRATGKTTKQKRQL) form a disordered region.

Belongs to the bacterial ribosomal protein bL35 family.

The polypeptide is Large ribosomal subunit protein bL35 (Mycoplasma mycoides subsp. mycoides SC (strain CCUG 32753 / NCTC 10114 / PG1)).